The chain runs to 72 residues: Translation initiation factor IF-1 (72 aa).

An S1-like domain is found at 1-72; it reads MAKDDVIEVD…DKGRITYRHK (72 aa).

Belongs to the IF-1 family. Component of the 30S ribosomal translation pre-initiation complex which assembles on the 30S ribosome in the order IF-2 and IF-3, IF-1 and N-formylmethionyl-tRNA(fMet); mRNA recruitment can occur at any time during PIC assembly.

Its subcellular location is the cytoplasm. In terms of biological role, one of the essential components for the initiation of protein synthesis. Stabilizes the binding of IF-2 and IF-3 on the 30S subunit to which N-formylmethionyl-tRNA(fMet) subsequently binds. Helps modulate mRNA selection, yielding the 30S pre-initiation complex (PIC). Upon addition of the 50S ribosomal subunit IF-1, IF-2 and IF-3 are released leaving the mature 70S translation initiation complex. This chain is Translation initiation factor IF-1, found in Helicobacter hepaticus (strain ATCC 51449 / 3B1).